Here is a 1258-residue protein sequence, read N- to C-terminus: Ice nucleation protein (1258 aa).

An octapeptide periodicity region spans residues 162–1217 (ATYGSTLSGT…LTAGENSVLI (1056 aa)). Disordered regions lie at residues 260 to 287 (YGST…KGSD), 311 to 342 (TQTA…GYGS), 356 to 383 (YGST…KGSD), 407 to 438 (TQTA…GYGS), and 452 to 480 (YGST…GSDL). Composition is skewed to polar residues over residues 261 to 286 (GSTQ…QKGS), 311 to 334 (TQTA…QKGS), 357 to 382 (GSTQ…QKGS), 407 to 430 (TQTA…QKGS), and 453 to 480 (GSTQ…GSDL).

The protein belongs to the bacterial ice nucleation protein family.

It is found in the cell outer membrane. In terms of biological role, ice nucleation proteins enable bacteria to nucleate crystallization in supercooled water. In Enterobacter agglomerans (Erwinia herbicola), this protein is Ice nucleation protein (iceE).